Consider the following 348-residue polypeptide: D-alanine--D-alanine ligase (348 aa).

The region spanning 136–341 (KYLLQTVGIP…YSDLIEELIQ (206 aa)) is the ATP-grasp domain. 169 to 224 (EGSLIYPVFVKPANMGSSVGISKVENREELQEALEEAFRYDARAIVEQGIEAREIE) lines the ATP pocket. 3 residues coordinate Mg(2+): Asp-295, Glu-308, and Asn-310.

It belongs to the D-alanine--D-alanine ligase family. Mg(2+) is required as a cofactor. The cofactor is Mn(2+).

It localises to the cytoplasm. It carries out the reaction 2 D-alanine + ATP = D-alanyl-D-alanine + ADP + phosphate + H(+). It participates in cell wall biogenesis; peptidoglycan biosynthesis. Cell wall formation. This is D-alanine--D-alanine ligase (ddl) from Enterococcus faecalis (strain ATCC 700802 / V583).